Reading from the N-terminus, the 285-residue chain is Extracellular metalloprotease SMAC_06893 (285 aa).

Residues 1–18 (MQIKSLLLAAAAAPAALG) form the signal peptide. His197 is a binding site for Zn(2+). Glu198 is a catalytic residue. His201 contributes to the Zn(2+) binding site. Cys233 and Cys260 form a disulfide bridge. A glycan (N-linked (GlcNAc...) asparagine) is linked at Asn282.

Belongs to the peptidase M43B family.

It localises to the secreted. In terms of biological role, secreted metalloproteinase that allows assimilation of proteinaceous substrates. The sequence is that of Extracellular metalloprotease SMAC_06893 from Sordaria macrospora (strain ATCC MYA-333 / DSM 997 / K(L3346) / K-hell).